Reading from the N-terminus, the 395-residue chain is MAKAKFERTKPHVNIGTIGHVDHGKTTLTAAITTVLAKQGKAEAKAYDQIDAAPEERERGITISTAHVEYETEARHYAHVDCPGHADYVKNMITGAAQMDGAILVVSAADGPMPQTREHILLSRQVGVPYIVVFLNKCDMVDDEELLELVEMEVRDLLSEYDFPGDEVPVIKGSALKALEGDPKWEEKIIELMNAVDEYIPTPQREVDKPFMMPIEDVFSITGRGTVATGRVERGTLKVGDPVEIIGLSDEPKATTVTGVEMFRKLLDQAEAGDNIGALLRGVSRDEVERGQVLAKPGSITPHTKFKAQVYVLTKEEGGRHTPFFSNYRPQFYFRTTDVTGIITLPEGVEMVMPGDNVEMTVELIAPIAIEEGTKFSIREGGRTVGAGSVSEIIE.

In terms of domain architecture, tr-type G spans 10-204; that stretch reads KPHVNIGTIG…AVDEYIPTPQ (195 aa). The segment at 19–26 is G1; sequence GHVDHGKT. GTP is bound at residue 19–26; sequence GHVDHGKT. Thr26 lines the Mg(2+) pocket. The tract at residues 60–64 is G2; it reads GITIS. Positions 81-84 are G3; the sequence is DCPG. GTP is bound by residues 81-85 and 136-139; these read DCPGH and NKCD. A G4 region spans residues 136–139; the sequence is NKCD. A G5 region spans residues 174–176; it reads SAL.

It belongs to the TRAFAC class translation factor GTPase superfamily. Classic translation factor GTPase family. EF-Tu/EF-1A subfamily. As to quaternary structure, monomer.

Its subcellular location is the cytoplasm. The enzyme catalyses GTP + H2O = GDP + phosphate + H(+). GTP hydrolase that promotes the GTP-dependent binding of aminoacyl-tRNA to the A-site of ribosomes during protein biosynthesis. In Geobacillus stearothermophilus (Bacillus stearothermophilus), this protein is Elongation factor Tu.